We begin with the raw amino-acid sequence, 283 residues long: Diaminopimelate epimerase (283 aa).

Residues Asn-13 and Asn-67 each coordinate substrate. Cys-76 (proton donor) is an active-site residue. Substrate is bound by residues 77–78 (GN), Asn-166, Asn-199, and 217–218 (ER). The active-site Proton acceptor is the Cys-226. 227 to 228 (GT) contacts substrate.

Belongs to the diaminopimelate epimerase family. In terms of assembly, homodimer.

Its subcellular location is the cytoplasm. The catalysed reaction is (2S,6S)-2,6-diaminopimelate = meso-2,6-diaminopimelate. It functions in the pathway amino-acid biosynthesis; L-lysine biosynthesis via DAP pathway; DL-2,6-diaminopimelate from LL-2,6-diaminopimelate: step 1/1. In terms of biological role, catalyzes the stereoinversion of LL-2,6-diaminopimelate (L,L-DAP) to meso-diaminopimelate (meso-DAP), a precursor of L-lysine and an essential component of the bacterial peptidoglycan. The protein is Diaminopimelate epimerase of Desulforapulum autotrophicum (strain ATCC 43914 / DSM 3382 / VKM B-1955 / HRM2) (Desulfobacterium autotrophicum).